We begin with the raw amino-acid sequence, 89 residues long: Cell division topological specificity factor (89 aa).

Belongs to the MinE family.

Prevents the cell division inhibition by proteins MinC and MinD at internal division sites while permitting inhibition at polar sites. This ensures cell division at the proper site by restricting the formation of a division septum at the midpoint of the long axis of the cell. The protein is Cell division topological specificity factor of Janthinobacterium sp. (strain Marseille) (Minibacterium massiliensis).